We begin with the raw amino-acid sequence, 683 residues long: Receptor-like serine/threonine-protein kinase At2g45590 (683 aa).

Residues 1-21 (MPSRLSPPDIPPLQPTPTVSD) form a disordered region. Topologically, residues 1–30 (MPSRLSPPDIPPLQPTPTVSDGHHRFQTLP) are extracellular. A helical transmembrane segment spans residues 31–51 (LIIAGSLTLTGVLLILVTLLI). The Cytoplasmic segment spans residues 52 to 683 (YRRLYRNRTA…FPFKSRKKAR (632 aa)). Residues 92–664 (FSESTHLGHG…GVSEPPHLPF (573 aa)) form the Protein kinase domain. ATP-binding positions include 98–106 (LGHGGFGSV) and lysine 121. Residue aspartate 223 is the Proton acceptor of the active site. Residues 406-436 (ERPSNNKEWINNGDGSSSVSKKKKKEKKRKP) form a disordered region. Over residues 411-424 (NKEWINNGDGSSSV) the composition is skewed to polar residues. The segment covering 425 to 436 (SKKKKKEKKRKP) has biased composition (basic residues).

This sequence belongs to the protein kinase superfamily. Ser/Thr protein kinase family.

The protein resides in the cell membrane. The catalysed reaction is L-seryl-[protein] + ATP = O-phospho-L-seryl-[protein] + ADP + H(+). The enzyme catalyses L-threonyl-[protein] + ATP = O-phospho-L-threonyl-[protein] + ADP + H(+). In Arabidopsis thaliana (Mouse-ear cress), this protein is Receptor-like serine/threonine-protein kinase At2g45590.